Consider the following 299-residue polypeptide: GTPase Era (299 aa).

The Era-type G domain maps to 4–171; the sequence is KSGFVAILGR…ISLLTDNLEE (168 aa). Residues 12-19 are G1; the sequence is GRPNVGKS. 12–19 contributes to the GTP binding site; the sequence is GRPNVGKS. The G2 stretch occupies residues 38–42; it reads QTTRN. Positions 59–62 are G3; sequence DTPG. GTP contacts are provided by residues 59-63 and 121-124; these read DTPGI and NKID. The segment at 121-124 is G4; that stretch reads NKID. The interval 150–152 is G5; sequence ISA. The KH type-2 domain occupies 202–280; that stretch reads TQQEIPHSVA…YLETWVKVKK (79 aa).

It belongs to the TRAFAC class TrmE-Era-EngA-EngB-Septin-like GTPase superfamily. Era GTPase family. In terms of assembly, monomer.

Its subcellular location is the cytoplasm. It is found in the cell membrane. In terms of biological role, an essential GTPase that binds both GDP and GTP, with rapid nucleotide exchange. Plays a role in 16S rRNA processing and 30S ribosomal subunit biogenesis and possibly also in cell cycle regulation and energy metabolism. The chain is GTPase Era from Streptococcus uberis (strain ATCC BAA-854 / 0140J).